The chain runs to 88 residues: Large ribosomal subunit protein bL31B (88 aa).

This sequence belongs to the bacterial ribosomal protein bL31 family. Type B subfamily. Part of the 50S ribosomal subunit.

This chain is Large ribosomal subunit protein bL31B, found in Burkholderia orbicola (strain MC0-3).